Here is a 209-residue protein sequence, read N- to C-terminus: Imidazole glycerol phosphate synthase subunit HisH (209 aa).

In terms of domain architecture, Glutamine amidotransferase type-1 spans 3-209 (KIGLIDYGMG…WINWLKKNKF (207 aa)). The active-site Nucleophile is the Cys81. Active-site residues include His185 and Glu187.

In terms of assembly, heterodimer of HisH and HisF.

The protein localises to the cytoplasm. The enzyme catalyses 5-[(5-phospho-1-deoxy-D-ribulos-1-ylimino)methylamino]-1-(5-phospho-beta-D-ribosyl)imidazole-4-carboxamide + L-glutamine = D-erythro-1-(imidazol-4-yl)glycerol 3-phosphate + 5-amino-1-(5-phospho-beta-D-ribosyl)imidazole-4-carboxamide + L-glutamate + H(+). It catalyses the reaction L-glutamine + H2O = L-glutamate + NH4(+). Its pathway is amino-acid biosynthesis; L-histidine biosynthesis; L-histidine from 5-phospho-alpha-D-ribose 1-diphosphate: step 5/9. In terms of biological role, IGPS catalyzes the conversion of PRFAR and glutamine to IGP, AICAR and glutamate. The HisH subunit catalyzes the hydrolysis of glutamine to glutamate and ammonia as part of the synthesis of IGP and AICAR. The resulting ammonia molecule is channeled to the active site of HisF. The protein is Imidazole glycerol phosphate synthase subunit HisH of Prochlorococcus marinus (strain NATL2A).